Here is a 62-residue protein sequence, read N- to C-terminus: Sperm protamine P1 (62 aa).

Residues 1-62 are disordered; the sequence is MARYRRHSRS…RYSRRGRRRY (62 aa).

This sequence belongs to the protamine P1 family. In terms of tissue distribution, testis.

Its subcellular location is the nucleus. It is found in the chromosome. Its function is as follows. Protamines substitute for histones in the chromatin of sperm during the haploid phase of spermatogenesis. They compact sperm DNA into a highly condensed, stable and inactive complex. In Neophascogale lorentzii (Long-clawed marsupial mouse), this protein is Sperm protamine P1 (PRM1).